We begin with the raw amino-acid sequence, 334 residues long: Probable fructose-bisphosphate aldolase class 1 (334 aa).

The protein belongs to the class I fructose-bisphosphate aldolase family.

The catalysed reaction is beta-D-fructose 1,6-bisphosphate = D-glyceraldehyde 3-phosphate + dihydroxyacetone phosphate. It participates in carbohydrate degradation; glycolysis; D-glyceraldehyde 3-phosphate and glycerone phosphate from D-glucose: step 4/4. This chain is Probable fructose-bisphosphate aldolase class 1, found in Xylella fastidiosa (strain 9a5c).